The chain runs to 186 residues: Protein GrpE (186 aa).

2 stretches are compositionally biased toward basic and acidic residues: residues 1–13 and 23–34; these read MSDN…EEQH and EETHQAEDAVEH. The interval 1–34 is disordered; it reads MSDNKTELNEEQHNATAEGEVSEETHQAEDAVEH.

The protein belongs to the GrpE family. As to quaternary structure, homodimer.

The protein localises to the cytoplasm. Participates actively in the response to hyperosmotic and heat shock by preventing the aggregation of stress-denatured proteins, in association with DnaK and GrpE. It is the nucleotide exchange factor for DnaK and may function as a thermosensor. Unfolded proteins bind initially to DnaJ; upon interaction with the DnaJ-bound protein, DnaK hydrolyzes its bound ATP, resulting in the formation of a stable complex. GrpE releases ADP from DnaK; ATP binding to DnaK triggers the release of the substrate protein, thus completing the reaction cycle. Several rounds of ATP-dependent interactions between DnaJ, DnaK and GrpE are required for fully efficient folding. This chain is Protein GrpE, found in Hydrogenovibrio crunogenus (strain DSM 25203 / XCL-2) (Thiomicrospira crunogena).